Here is a 655-residue protein sequence, read N- to C-terminus: Alpha-L-iduronidase (655 aa).

The N-terminal stretch at 1-25 (MRPPGPRAPGLALLAALLAAPRALA) is a signal peptide. Alpha-D-mannopyranose-binding residues include proline 53, leucine 55, and histidine 57. Histidine 90 lines the alpha-L-iduronate pocket. Asparagine 109 carries an N-linked (GlcNAc...) asparagine glycan. Alpha-L-iduronate is bound by residues asparagine 180 and glutamate 181. Glutamate 181 acts as the Proton donor in catalysis. N-linked (GlcNAc...) asparagine glycans are attached at residues asparagine 189 and asparagine 242. Lysine 263, glutamate 298, and glycine 304 together coordinate alpha-L-iduronate. The active-site Nucleophile is the glutamate 298. Tryptophan 305 contacts alpha-D-mannopyranose. Asparagine 335 carries an N-linked (GlcNAc...) asparagine glycan. Positions 348 and 362 each coordinate alpha-L-iduronate. 2 N-linked (GlcNAc...) asparagine glycosylation sites follow: asparagine 371 and asparagine 414. An intrachain disulfide couples cysteine 540 to cysteine 576.

Belongs to the glycosyl hydrolase 39 family. Monomer. A smaller 63 kDa protein probably arises from IDUA protein by proteolytic cleavage. In terms of processing, N-glycosylation contributes to substrate binding and is required for full enzymatic activity. Detected in testis (at protein level). Expressed ubiquitously.

Its subcellular location is the lysosome. It catalyses the reaction Hydrolysis of unsulfated alpha-L-iduronosidic linkages in dermatan sulfate.. The sequence is that of Alpha-L-iduronidase (IDUA) from Canis lupus familiaris (Dog).